The sequence spans 366 residues: ALFGTKDTTTAHSDYEIILEGGSSSWGQVKGRAKVNVPAAIPLLPTDCNIRIDAKPLDAQKGVVRFTTKIESVVDSVKNTLNVEVDIANETKDRRIAVGEGSLSVGDFSHSFSFEGQVVNMYYYRSDAVRRNIPNPIYMQGRQFHDILMKVPLDNNDLVDTWEGFQQSISGGGANFGDWIREFWFIGPAFAAINEGGQRISPIVVNSSNVEGGEKGPVGVTRWKFSHAGSGVVDSISRWTELFPVEQLNKPASIEGGFRSDSQGIEVKVDGNLPGVSRDAGGGLRRILNHPLIPLVHHGMVGKFNDFTVDTQLKIVLPKGYKIRYAAPQFRSQNLEEYRWSGGAYARWVEHVCKGGTGQFEVLYAQ.

His110, His145, His290, His297, and His298 together coordinate bacteriochlorophyll a.

Homotrimer. Each subunit contains 7 molecules of bacteriochlorophyll a.

Its function is as follows. Intermediary in the transfer of excitation energy from the chlorophyll to the reaction centers. The chain is Bacteriochlorophyll a protein from Prosthecochloris aestuarii.